A 1249-amino-acid chain; its full sequence is Apoptotic protease-activating factor 1 (1249 aa).

The region spanning 1 to 90 is the CARD domain; sequence MDAKARNCLL…KDLAGLLHSG (90 aa). One can recognise an NB-ARC domain in the interval 106–415; it reads NTSFVRTVLC…LETEEVEDIL (310 aa). Residues 154 to 161 and arginine 265 contribute to the ATP site; that span reads GMAGCGKS. One copy of the WD 1-1 repeat lies at 613–652; that stretch reads PHTDAVYHACFSQDGQRIASCGADKTLQVFKAETGEKLLD. Residues 655–694 form a WD 1-2 repeat; that stretch reads AHEDEVLCCAFSSDDSYIATCSVDKKVKIWDSGTGKLVHT. One copy of the WD 1-3 repeat lies at 697–738; the sequence is EHSEQVNCCHFTNKSNHLLLATGSNDSFLKLWDLNQKECRNT. The WD 1-4 repeat unit spans residues 741–780; the sequence is GHTNSVTHCRFSPDDELLASCSADGTLKLWDVRSANEKKS. The stretch at 796–837 is one WD 1-5 repeat; the sequence is DVEVIVKCCSWSADGDRIIVAAKNKVLLLDIHTSGLLTEIHT. One copy of the WD 1-6 repeat lies at 838–877; sequence GHHSTIQYCDFSPYDHLAVIALSQYCVELWNIDSRVKVAD. A WD 1-7 repeat occupies 880–910; the sequence is GHLSWVHGVMFSPDGSSFLTASDDQTIRVWE. Positions 910–921 are interpropeller linker; that stretch reads ETRKVCKNSAIV. Residues 922–958 form a WD 2-1 repeat; that stretch reads LKQEIDVVFQENEMMVLAVDNIRGLQLIAGKTGQIDY. The WD 2-2 repeat unit spans residues 959–998; that stretch reads LPEAQVSCCCLSPHLEYVAFGDEEGAIKIIELPNNRVFSS. A WD 2-3 repeat occupies 1001–1040; it reads GHKKAVRHIQFTADGKTLISSSEDSVIQVWNWQTEEYVFL. One copy of the WD 2-4 repeat lies at 1042–1080; that stretch reads AHQETVKDFRLLRDSRLLSWSFDGTVKVWNVITGRIERD. A WD 2-5 repeat occupies 1083–1122; the sequence is CHQGTVLSCAISSDATKFSSTSADKTAKIWSFELPSPLHE. The WD 2-6 repeat unit spans residues 1125 to 1164; sequence GHNSCVRCSAFSLDGILLATGDDNGEIRIWNVSDGQLLHL. One copy of the WD 2-7 repeat lies at 1176 to 1213; it reads THGGWVTDVCFSPDRKMLVSAGGYLKWWNVVTGESSQT. The WD 2-8 repeat unit spans residues 1214 to 1249; that stretch reads FYTNGTNLKKIHVSPDFRTYVTVDNLGILYILQVLE.

In terms of assembly, monomer. Oligomerizes to a heptameric ring, known as the apoptosome, upon binding of cytochrome c and dATP. Oligomeric Apaf-1 and pro-caspase-9 bind to each other via their respective NH2-terminal CARD domains. Interacts with UACA. Interacts with APIP. Interacts (via CARD and NACHT domains) with NAIP/BIRC1 (via NACHT domain). Interacts with CIAO2A.

Its subcellular location is the cytoplasm. Regulates programmed cell death; necessary for normal brain development. Participates with pro-caspase-9 (Apaf-3) in the cytochrome c-dependent activation of caspase-3, leading to apoptosis. This activation requires ATP. This is Apoptotic protease-activating factor 1 (Apaf1) from Rattus norvegicus (Rat).